The following is an 875-amino-acid chain: Serrate RNA effector molecule homolog (875 aa).

Residues 1–90 form a disordered region; sequence MGDSDDEYDR…RRDWDEHSSD (90 aa). Position 2 is an N-acetylglycine (Gly2). Ser4 carries the phosphoserine modification. Tyr8 carries the post-translational modification Phosphotyrosine. Basic and acidic residues predominate over residues 8–73; it reads YDRRRRDKFR…ERFSPPRHEL (66 aa). 3 positions are modified to phosphoserine: Ser67, Ser74, and Ser136. Residue Lys150 forms a Glycyl lysine isopeptide (Lys-Gly) (interchain with G-Cter in SUMO2) linkage. The segment at 272-411 is disordered; it reads EEEEQAGKTG…KPKDAAGLEC (140 aa). The span at 297–345 shows a compositional bias: basic and acidic residues; that stretch reads EGERKANDKDEKKEDGKQAENDSSNDDKTKKSEGDGDKEEKKEEAEKEA. Positions 369-386 are enriched in acidic residues; it reads SESESEGGQAEEEKEEAE. Residues 387 to 411 are compositionally biased toward basic and acidic residues; sequence EALKEKEKPKEEEKEKPKDAAGLEC. A phosphoserine mark is found at Ser492 and Ser539. Thr543 bears the Phosphothreonine mark. Residue Ser569 is modified to Phosphoserine. Residues 571–597 are disordered; it reads EEEELLGSSGGPPPEEPPKEGNPAEIN. Thr670 bears the Phosphothreonine mark. Ser678 bears the Phosphoserine mark. Omega-N-methylarginine is present on residues Arg832, Arg839, and Arg849. Residues 834–853 form a disordered region; it reads NYDAFRGQGGYPGKPRNRMV.

This sequence belongs to the ARS2 family. In terms of assembly, interacts with CASP8AP2 and ERBB4. Interacts with NCBP1/CBP80 and DROSHA. Interacts with LUZP4. Interacts with NCBP2/CBP20 and NCBP3. Interacts with MTREX. In terms of tissue distribution, widely expressed, with a preference for proliferating cells. Highly expressed in hematopoietic tissues and reduced or absent expression in parenchymal organs like liver and kidney. In the brain, expressed in the subventricular zone by niche astrocytes, ependymal cells and neural stem cells. In this cerebral context, expressed in slowly dividing cells.

It localises to the nucleus. The protein localises to the nucleoplasm. Its subcellular location is the cytoplasm. Functionally, acts as a mediator between the cap-binding complex (CBC) and the primary microRNAs (miRNAs) processing machinery during cell proliferation. Contributes to the stability and delivery of capped primary miRNA transcripts to the primary miRNA processing complex containing DGCR8 and DROSHA, thereby playing a role in RNA-mediated gene silencing (RNAi) by miRNAs. Binds capped RNAs (m7GpppG-capped RNA); however interaction is probably mediated via its interaction with NCBP1/CBP80 component of the CBC complex. Involved in cell cycle progression at S phase. Does not directly confer arsenite resistance but rather modulates arsenic sensitivity. Independently of its activity on miRNAs, necessary and sufficient to promote neural stem cell self-renewal. Does so by directly binding SOX2 promoter and positively regulating its transcription. This Mus musculus (Mouse) protein is Serrate RNA effector molecule homolog (Srrt).